We begin with the raw amino-acid sequence, 113 residues long: UPF0122 protein PEPE_0845 (113 aa).

The protein belongs to the UPF0122 family.

Functionally, might take part in the signal recognition particle (SRP) pathway. This is inferred from the conservation of its genetic proximity to ftsY/ffh. May be a regulatory protein. In Pediococcus pentosaceus (strain ATCC 25745 / CCUG 21536 / LMG 10740 / 183-1w), this protein is UPF0122 protein PEPE_0845.